Consider the following 387-residue polypeptide: 3-ketoacyl-CoA thiolase (387 aa).

Residue Cys91 is the Acyl-thioester intermediate of the active site. Residues His343 and Cys373 each act as proton acceptor in the active site.

Belongs to the thiolase-like superfamily. Thiolase family. In terms of assembly, heterotetramer of two alpha chains (FadB) and two beta chains (FadA).

The protein resides in the cytoplasm. It catalyses the reaction an acyl-CoA + acetyl-CoA = a 3-oxoacyl-CoA + CoA. It participates in lipid metabolism; fatty acid beta-oxidation. Catalyzes the final step of fatty acid oxidation in which acetyl-CoA is released and the CoA ester of a fatty acid two carbons shorter is formed. This Vibrio vulnificus (strain CMCP6) protein is 3-ketoacyl-CoA thiolase.